A 731-amino-acid polypeptide reads, in one-letter code: Ubiquitin carboxyl-terminal hydrolase 17 (731 aa).

Residues Cys57, Cys60, Cys68, Cys71, Cys77, Cys81, His90, and Cys94 each contribute to the Zn(2+) site. Residues 57–94 (CAVCLYPTTTRCSQCKSVRYCSSKCQILHWRRGHKEEC) form an MYND-type zinc finger. Disordered regions lie at residues 171-219 (YETR…DSAN) and 262-281 (LPSK…SGLK). 2 stretches are compositionally biased toward polar residues: residues 207–219 (GNQN…DSAN) and 265–281 (KANS…SGLK). Positions 329 to 633 (FGLVNLGNSC…GAYMLLYARD (305 aa)) constitute a USP domain. Cys338 functions as the Nucleophile in the catalytic mechanism. The active-site Proton acceptor is His592. The interval 637–702 (PVSKNGGRKS…TSSCSTKDSS (66 aa)) is disordered. Low complexity predominate over residues 677 to 701 (DWSSGSLSSMFSSSDTTSSCSTKDS).

It belongs to the peptidase C19 family.

It carries out the reaction Thiol-dependent hydrolysis of ester, thioester, amide, peptide and isopeptide bonds formed by the C-terminal Gly of ubiquitin (a 76-residue protein attached to proteins as an intracellular targeting signal).. In terms of biological role, recognizes and hydrolyzes the peptide bond at the C-terminal Gly of ubiquitin. Involved in the processing of poly-ubiquitin precursors as well as that of ubiquitinated proteins. The protein is Ubiquitin carboxyl-terminal hydrolase 17 (UBP17) of Arabidopsis thaliana (Mouse-ear cress).